We begin with the raw amino-acid sequence, 256 residues long: Indole-3-glycerol phosphate synthase (256 aa).

Belongs to the TrpC family.

The catalysed reaction is 1-(2-carboxyphenylamino)-1-deoxy-D-ribulose 5-phosphate + H(+) = (1S,2R)-1-C-(indol-3-yl)glycerol 3-phosphate + CO2 + H2O. Its pathway is amino-acid biosynthesis; L-tryptophan biosynthesis; L-tryptophan from chorismate: step 4/5. The polypeptide is Indole-3-glycerol phosphate synthase (Caldanaerobacter subterraneus subsp. tengcongensis (strain DSM 15242 / JCM 11007 / NBRC 100824 / MB4) (Thermoanaerobacter tengcongensis)).